Reading from the N-terminus, the 186-residue chain is Tumor necrosis factor alpha-induced protein 8-like protein 1 (186 aa).

Belongs to the TNFAIP8 family. As to quaternary structure, interacts with FBXW5; TNFAIP8L1 competes with TSC2 to bind FBXW5 increasing TSC2 stability by preventing its ubiquitination.

The protein resides in the cytoplasm. In terms of biological role, acts as a negative regulator of mTOR activity. In Bos taurus (Bovine), this protein is Tumor necrosis factor alpha-induced protein 8-like protein 1 (TNFAIP8L1).